Here is a 77-residue protein sequence, read N- to C-terminus: Apelin (77 aa).

An N-terminal signal peptide occupies residues 1–22; the sequence is MNLRRCVQALLLLWLCLSAVCG. Positions 23 to 41 are excised as a propeptide; it reads GPLLQTSDGKEMEEGTIRY. Residues 43–77 form a disordered region; that stretch reads VQPRGPRSGPGPWQGGRRKFRRQRPRLSHKGPMPF. Residues 58–71 show a composition bias toward basic residues; the sequence is GRRKFRRQRPRLSH. The residue at position 65 (Gln-65) is a Pyrrolidone carboxylic acid.

Belongs to the apelin family. At least 5 active peptides may be produced by proteolytic processing of the peptide precursor.

It is found in the secreted. It localises to the extracellular space. Functionally, peptide hormone that functions as endogenous ligand for the G-protein-coupled apelin receptor (APLNR/APJ), that plays a role in cadiovascular homeostasis. Functions as a balanced agonist activating both G(i) protein pathway and beta-arrestin pathway of APLNR. Downstream G proteins activation, apelin can inhibit cAMP production and activate key intracellular effectors such as ERKs. On the other hand, APLNR activation induces beta-arrestin recruitment to the membrane leading to desensitization and internalization of the receptor. Apelin blunts cardiac hypertrophic induction from APLNR on response to pathological stimuli, but also induces myocardial hypertrophy under normal conditions. Apelin-36 dissociates more hardly than (pyroglu)apelin-13 from APLNR. Involved in the regulation of cardiac precursor cell movements during gastrulation and heart morphogenesis. Has an inhibitory effect on cytokine production in response to T-cell receptor/CD3 cross-linking; the oral intake of apelin in the colostrum and the milk might therefore modulate immune responses in neonates. Plays a role in early coronary blood vessels formation. Mediates myocardial contractility in an ERK1/2-dependent manner. May also have a role in the central control of body fluid homeostasis by influencing vasopressin release and drinking behavior. The protein is Apelin (APLN) of Bos taurus (Bovine).